The chain runs to 347 residues: Globoside alpha-1,3-N-acetylgalactosaminyltransferase 1 (347 aa).

Residues 1–5 lie on the Cytoplasmic side of the membrane; sequence MHRRR. The chain crosses the membrane as a helical; Signal-anchor for type II membrane protein span at residues 6-26; sequence LALGLGFCLLAGTSLSVLWVY. Topologically, residues 27 to 347 are lumenal; it reads LENWLPVSYV…LDKDISCLRS (321 aa). Asn108 is a glycosylation site (N-linked (GlcNAc...) asparagine). Residues 116-121, 206-208, and 228-231 contribute to the substrate site; these read FAVGKY, DVD, and HPSY. Asp206 and Asp208 together coordinate Mn(2+). Glu298 functions as the Nucleophile in the catalytic mechanism.

This sequence belongs to the glycosyltransferase 6 family. Mn(2+) serves as cofactor. Widely expressed. Expressed at higher level in placenta, ovary and peripheral blood leukocyte, whereas it is weakly expressed in liver, thymus, and testis. Expressed in bone marrow erythroid cells.

The protein resides in the golgi apparatus membrane. The protein operates within protein modification; protein glycosylation. Functionally, has lost the ability to synthesize Forssman glycolipid antigen (FORS1/FG). Might have acquired an alternative function in glycosphingolipid metabolism, but it remains to be established. It appears to have drifted more slowly than confirmed pseudogenes in the glycosyltransferase 6 family, suggesting that it has remained under evolutionary pressure. This is Globoside alpha-1,3-N-acetylgalactosaminyltransferase 1 from Homo sapiens (Human).